The following is a 330-amino-acid chain: Malate dehydrogenase (330 aa).

15–21 provides a ligand contact to NAD(+); it reads GAGGQIG. The substrate site is built by arginine 95 and arginine 101. NAD(+)-binding positions include asparagine 108, glutamine 115, and 132–134; that span reads VGN. Asparagine 134 and arginine 165 together coordinate substrate. Histidine 190 acts as the Proton acceptor in catalysis.

Belongs to the LDH/MDH superfamily. MDH type 2 family.

The enzyme catalyses (S)-malate + NAD(+) = oxaloacetate + NADH + H(+). In terms of biological role, catalyzes the reversible oxidation of malate to oxaloacetate. This is Malate dehydrogenase from Corynebacterium jeikeium (strain K411).